A 348-amino-acid polypeptide reads, in one-letter code: Dihydroorotase (348 aa).

Zn(2+) contacts are provided by His-17 and His-19. Substrate-binding positions include 19-21 (HLR) and Asn-45. Zn(2+) is bound by residues Lys-103, His-140, and His-178. Residue Lys-103 is modified to N6-carboxylysine. His-140 contacts substrate. Leu-223 contributes to the substrate binding site. Asp-251 is a Zn(2+) binding site. Residue Asp-251 is part of the active site. The substrate site is built by His-255 and Ala-267.

The protein belongs to the metallo-dependent hydrolases superfamily. DHOase family. Class II DHOase subfamily. In terms of assembly, homodimer. Requires Zn(2+) as cofactor.

The catalysed reaction is (S)-dihydroorotate + H2O = N-carbamoyl-L-aspartate + H(+). Its pathway is pyrimidine metabolism; UMP biosynthesis via de novo pathway; (S)-dihydroorotate from bicarbonate: step 3/3. In terms of biological role, catalyzes the reversible cyclization of carbamoyl aspartate to dihydroorotate. The protein is Dihydroorotase of Yersinia pseudotuberculosis serotype O:1b (strain IP 31758).